Consider the following 133-residue polypeptide: Crossover junction endodeoxyribonuclease Hjc (133 aa).

E12 is a binding site for Mg(2+). The active site involves S32. The Mg(2+) site is built by D36 and E49.

This sequence belongs to the Holliday junction resolvase Hjc family. In terms of assembly, homodimer. Mg(2+) is required as a cofactor.

It carries out the reaction Endonucleolytic cleavage at a junction such as a reciprocal single-stranded crossover between two homologous DNA duplexes (Holliday junction).. Functionally, a structure-specific endonuclease that resolves Holliday junction (HJ) intermediates during genetic recombination. Cleaves 4-way DNA junctions introducing paired nicks in opposing strands, leaving a 5'-terminal phosphate and a 3'-terminal hydroxyl group that are subsequently ligated to produce recombinant products. The chain is Crossover junction endodeoxyribonuclease Hjc from Methanocaldococcus jannaschii (strain ATCC 43067 / DSM 2661 / JAL-1 / JCM 10045 / NBRC 100440) (Methanococcus jannaschii).